The following is a 463-amino-acid chain: MQVSRVLAALCGMLLCASGLFAASGDFCDSSLCLNGGTCLTGQDNDIYCLCPEGFTGLVCNETERGPCSPNPCYNDAKCLVTLDTQRGDIFTEYICQCPVGYSGIHCETETNYYNLDGEYMFTTAVPNTAVPTPAPTPDLSNNLASRCSTQLGMEGGAIADSQISASSVYMGFMGLQRWGPELARLYRTGIVNAWTASNYDSKPWIQVNLLRKMRVSGVMTQGASRAGRAEYLKTFKVAYSLDGRKFEFIQDESGGDKEFLGNLDNNSLKVNMFNPTLEAQYIKLYPVSCHRGCTLRFELLGCELHGCSEPLGLKNNTIPDSQMSASSSYKTWNLRAFGWYPHLGRLDNQGKINAWTAQSNSAKEWLQVDLGTQRQVTGIITQGARDFGHIQYVASYKVAHSDDGVQWTVYEEQGSSKVFQGNLDNNSHKKNIFEKPFMARYVRVLPVSWHNRITLRLELLGC.

A signal peptide spans 1 to 22 (MQVSRVLAALCGMLLCASGLFA). EGF-like domains follow at residues 24–61 (SGDF…LVCN) and 64–108 (ERGP…IHCE). 3 disulfide bridges follow: Cys28/Cys39, Cys33/Cys49, and Cys51/Cys60. N-linked (GlcNAc...) asparagine glycosylation occurs at Asn61. Disulfide bonds link Cys68–Cys79, Cys73–Cys96, Cys98–Cys107, Cys148–Cys303, Cys290–Cys294, and Cys308–Cys463. The Cell attachment site signature appears at 87 to 89 (RGD). F5/8 type C domains lie at 148-303 (CSTQ…LLGC) and 308-463 (CSEP…LLGC). An N-linked (GlcNAc...) asparagine glycan is attached at Asn266. Residues Asn316 and Asn426 are each glycosylated (N-linked (GlcNAc...) asparagine).

In terms of processing, N-glycosylated. Isoform 1 also exists in both an O-glycosylated and a non-O-glycosylated form. In terms of tissue distribution, mammary epithelial cell surfaces and spermatozoan. Isoform 2 is present in brain, heart, kidney and spleen and at low levels in lung, liver, small intestine and testis.

It is found in the membrane. Its subcellular location is the secreted. The protein localises to the cytoplasmic vesicle. It localises to the secretory vesicle. The protein resides in the acrosome membrane. Functionally, contributes to phagocytic removal of apoptotic cells in many tissues. Specific ligand for the alpha-v/beta-3 and alpha-v/beta-5 receptors. Also binds to phosphatidylserine-enriched cell surfaces in a receptor-independent manner. Zona pellucida-binding protein which may play a role in gamete interaction. Plays an important role in the maintenance of intestinal epithelial homeostasis and the promotion of mucosal healing. Promotes VEGF-dependent neovascularization. This chain is Lactadherin (Mfge8), found in Mus musculus (Mouse).